The following is a 331-amino-acid chain: 2-keto-3-deoxygluconate permease (331 aa).

The next 10 membrane-spanning stretches (helical) occupy residues 10 to 30 (IPGG…TLAP), 42 to 62 (GMIS…GASI), 77 to 97 (LVLT…MFIP), 100 to 120 (GIQT…AMDM), 141 to 161 (AFVL…LGSA), 163 to 183 (LASF…IGFA), 200 to 220 (PVLI…NVIM), 224 to 244 (LLGI…LIIA), 254 to 274 (TAGV…MIIA), and 289 to 309 (ALVA…TALY).

The protein belongs to the KdgT transporter family.

Its subcellular location is the cell inner membrane. The catalysed reaction is 2-dehydro-3-deoxy-D-gluconate(in) + H(+)(in) = 2-dehydro-3-deoxy-D-gluconate(out) + H(+)(out). Catalyzes the proton-dependent uptake of 2-keto-3-deoxygluconate (KDG) into the cell. In Enterobacter sp. (strain 638), this protein is 2-keto-3-deoxygluconate permease.